A 700-amino-acid polypeptide reads, in one-letter code: Elongation factor G (700 aa).

In terms of domain architecture, tr-type G spans 8–290; sequence ERYRNIGISA…GVIDFMPSPI (283 aa). Residues 17–24, 88–92, and 142–145 contribute to the GTP site; these read AHIDAGKT, DTPGH, and NKMD.

The protein belongs to the TRAFAC class translation factor GTPase superfamily. Classic translation factor GTPase family. EF-G/EF-2 subfamily.

It localises to the cytoplasm. Catalyzes the GTP-dependent ribosomal translocation step during translation elongation. During this step, the ribosome changes from the pre-translocational (PRE) to the post-translocational (POST) state as the newly formed A-site-bound peptidyl-tRNA and P-site-bound deacylated tRNA move to the P and E sites, respectively. Catalyzes the coordinated movement of the two tRNA molecules, the mRNA and conformational changes in the ribosome. The protein is Elongation factor G of Methylibium petroleiphilum (strain ATCC BAA-1232 / LMG 22953 / PM1).